Here is a 218-residue protein sequence, read N- to C-terminus: DNA-directed RNA polymerase III subunit RPC7-like (218 aa).

Residues Thr130–Tyr218 are disordered. Positions Lys139–Glu160 are enriched in basic and acidic residues. Acidic residues-rich tracts occupy residues Val161–Asp193 and Asn201–Tyr218.

The protein belongs to the eukaryotic RPC7 RNA polymerase subunit family. As to quaternary structure, component of the RNA polymerase III (Pol III) complex consisting of 17 subunits. Pol III exists as two alternative complexes defined by the mutually exclusive incorporation of subunit POLR3G/RPC7alpha or POLR3GL/RPC7beta. Found in a trimeric complex with POLR3C/RPC3 and POLR3F/RPC6. Directly interacts with POLR3C. Expressed in the liver.

The protein resides in the nucleus. DNA-dependent RNA polymerase catalyzes the transcription of DNA into RNA using the four ribonucleoside triphosphates as substrates. Specific peripheric component of RNA polymerase III which synthesizes small RNAs, such as 5S rRNA and tRNAs. The chain is DNA-directed RNA polymerase III subunit RPC7-like from Mus musculus (Mouse).